A 176-amino-acid chain; its full sequence is PPE family protein PPE57 (176 aa).

Belongs to the mycobacterial PPE family. Interacts with human TLR2.

It localises to the secreted. It is found in the cell wall. Its subcellular location is the cell surface. Plays a key role in regulating innate and adaptive immune responses through human Toll-like receptor 2 (TLR2). Interacts with TLR2, leading to the subsequent activation of the mitogen-activated protein kinase (MAPK) and nuclear factor kappa B (NF-kappa-B) signaling pathways. Induces macrophage activation by augmenting the expression of several cell surface molecules (CD40, CD80, CD86 and MHC class II) and pro-inflammatory cytokines (TNF-alpha, IL-6 and IL-12p40) within macrophages. Also participates in adaptive immunity by directing Th1-polarised immune responses. Stimulates specific humoral and cellular immune responses in tuberculosis (TB) patients. Induces a strong IgG(1) antibody response and an increased Th1/Th2 type immune response in mice. In Mycobacterium tuberculosis (strain ATCC 25618 / H37Rv), this protein is PPE family protein PPE57.